Reading from the N-terminus, the 257-residue chain is MPRLHDHVWSCSGSGAARPHSLPRGMIAAARCPQGSGAPEPAPRSPRAGTAGCGARPGSWHHDLVQRSLVLFSFGVVLALVLNLLQIQRNVTLFPDEVIATIFSSAWWVPPCCGTAAAVVGLLYPCIDSHLGEPHKFKREWASVMRCIAVFVGINHASAKLDFANNVQLSLTLAALSLGLWWTFDRSRSGLGLGITIAFLATLITQFLVYNGVYQYTSPDFLYIRSWLPCIFFSGGVTVGNIGRQLAMGVPEKPHSD.

Topologically, residues 1-64 (MPRLHDHVWS…ARPGSWHHDL (64 aa)) are cytoplasmic. A disordered region spans residues 32–54 (CPQGSGAPEPAPRSPRAGTAGCG). A helical membrane pass occupies residues 65–87 (VQRSLVLFSFGVVLALVLNLLQI). The Extracellular segment spans residues 88–106 (QRNVTLFPDEVIATIFSSA). A helical membrane pass occupies residues 107–124 (WWVPPCCGTAAAVVGLLY). At 125 to 139 (PCIDSHLGEPHKFKR) the chain is on the cytoplasmic side. Glycyl lysine isopeptide (Lys-Gly) (interchain with G-Cter in ubiquitin) cross-links involve residues K136 and K138. Residues 140–162 (EWASVMRCIAVFVGINHASAKLD) form a helical membrane-spanning segment. At 163-165 (FAN) the chain is on the extracellular side. The chain crosses the membrane as a helical span at residues 166-184 (NVQLSLTLAALSLGLWWTF). The Cytoplasmic segment spans residues 185 to 189 (DRSRS). S187 carries the post-translational modification Phosphoserine. A helical transmembrane segment spans residues 190 to 211 (GLGLGITIAFLATLITQFLVYN). Over 212–225 (GVYQYTSPDFLYIR) the chain is Extracellular. The helical transmembrane segment at 226 to 243 (SWLPCIFFSGGVTVGNIG) threads the bilayer. At 244-257 (RQLAMGVPEKPHSD) the chain is on the cytoplasmic side. Positions 251–257 (PEKPHSD) match the KxHxx motif.

It belongs to the INSIG family. Interacts with SCAP; interaction is direct and only takes place in the presence of sterols; it prevents interaction between SCAP and the coat protein complex II (COPII). Associates with the SCAP-SREBP complex (composed of SCAP and SREBF1/SREBP1 or SREBF2/SREBP2); association is mediated via its interaction with SCAP and only takes place in the presence of sterols. Interaction with SCAP is mutually exclusive with PAQR3. Interacts with HMGCR (via its SSD); the interaction, accelerated by sterols, leads to the recruitment of HMGCR to AMFR/gp78 for its ubiquitination by the sterol-mediated ERAD pathway. Interacts with AMFR/gp78 (via its membrane domain); the interaction recruits HMCR at the ER membrane for its ubiquitination and degradation by the sterol-mediated ERAD pathway. Interacts with SOAT2/ACAT2; leading to promote recruitment of AMFR/gp78 and subsequent ubiquitination of SOAT2/ACAT2. Interacts with RNF139. Interacts with RNF145. In terms of processing, phosphorylation at Ser-187 by PCK1 reduces binding to oxysterol, disrupting the interaction between INSIG1 and SCAP, thereby promoting nuclear translocation of SREBP proteins (SREBF1/SREBP1 or SREBF2/SREBP2) and subsequent transcription of downstream lipogenesis-related genes. Ubiquitinated by AMFR/gp78 in response to sterol deprivation, leading to its degradation: when the SCAP-SREBP complex becomes dissociated from INSIG1, INSIG1 is then ubiquitinated and degraded in proteasomes. Although ubiquitination is required for rapid INSIG1 degradation, it is not required for release of the SCAP-SREBP complex. Ubiquitinated by RNF139.

Its subcellular location is the endoplasmic reticulum membrane. Functionally, oxysterol-binding protein that mediates feedback control of cholesterol synthesis by controlling both endoplasmic reticulum to Golgi transport of SCAP and degradation of HMGCR. Acts as a negative regulator of cholesterol biosynthesis by mediating the retention of the SCAP-SREBP complex in the endoplasmic reticulum, thereby blocking the processing of sterol regulatory element-binding proteins (SREBPs) SREBF1/SREBP1 and SREBF2/SREBP2. Binds oxysterol, including 25-hydroxycholesterol, regulating interaction with SCAP and retention of the SCAP-SREBP complex in the endoplasmic reticulum. In presence of oxysterol, interacts with SCAP, retaining the SCAP-SREBP complex in the endoplasmic reticulum, thereby preventing SCAP from escorting SREBF1/SREBP1 and SREBF2/SREBP2 to the Golgi. Sterol deprivation or phosphorylation by PCK1 reduce oxysterol-binding, disrupting the interaction between INSIG1 and SCAP, thereby promoting Golgi transport of the SCAP-SREBP complex, followed by processing and nuclear translocation of SREBF1/SREBP1 and SREBF2/SREBP2. Also regulates cholesterol synthesis by regulating degradation of HMGCR: initiates the sterol-mediated ubiquitin-mediated endoplasmic reticulum-associated degradation (ERAD) of HMGCR via recruitment of the reductase to the ubiquitin ligases AMFR/gp78 and/or RNF139. Also regulates degradation of SOAT2/ACAT2 when the lipid levels are low: initiates the ubiquitin-mediated degradation of SOAT2/ACAT2 via recruitment of the ubiquitin ligases AMFR/gp78. The sequence is that of Insulin-induced gene 1 protein from Cricetulus griseus (Chinese hamster).